The sequence spans 182 residues: UPF0316 protein BCG9842_B1857 (182 aa).

3 helical membrane passes run 6–26 (LIFVLQIIYVPILTIRTILLV), 32–52 (SAAGVGLLEGAIYIVSLGIVF), and 58–78 (WMNIVAYVIGFSTGLLLGGYI).

The protein belongs to the UPF0316 family.

It is found in the cell membrane. In Bacillus cereus (strain G9842), this protein is UPF0316 protein BCG9842_B1857.